A 208-amino-acid polypeptide reads, in one-letter code: dTTP/UTP pyrophosphatase (208 aa).

Asp-79 acts as the Proton acceptor in catalysis.

The protein belongs to the Maf family. YhdE subfamily. Requires a divalent metal cation as cofactor.

It localises to the cytoplasm. It catalyses the reaction dTTP + H2O = dTMP + diphosphate + H(+). The catalysed reaction is UTP + H2O = UMP + diphosphate + H(+). Its function is as follows. Nucleoside triphosphate pyrophosphatase that hydrolyzes dTTP and UTP. May have a dual role in cell division arrest and in preventing the incorporation of modified nucleotides into cellular nucleic acids. The chain is dTTP/UTP pyrophosphatase from Mesorhizobium japonicum (strain LMG 29417 / CECT 9101 / MAFF 303099) (Mesorhizobium loti (strain MAFF 303099)).